Reading from the N-terminus, the 97-residue chain is Apolipoprotein C-II (97 aa).

A signal peptide spans 1-22 (MGSRFFLALFLVILMLGNEVQG). The tract at residues 63-71 (SMDEKLRDM) is lipid binding. A lipoprotein lipase cofactor region spans residues 75 to 97 (SSAAMSTYAGIFTDQLLTLLRGE).

The protein belongs to the apolipoprotein C2 family. Adult and fetal liver, intestine and peritoneal macrophages.

Its subcellular location is the secreted. Component of chylomicrons, very low-density lipoproteins (VLDL), low-density lipoproteins (LDL), and high-density lipoproteins (HDL) in plasma. Plays an important role in lipoprotein metabolism as an activator of lipoprotein lipase. In Mus musculus (Mouse), this protein is Apolipoprotein C-II (Apoc2).